The primary structure comprises 164 residues: R-phycoerythrin alpha chain (164 aa).

Residues Cys-82 and Cys-139 each contribute to the (2R,3E)-phycoerythrobilin site.

This sequence belongs to the phycobiliprotein family. In terms of assembly, heterodimer of an alpha and a beta chain. Post-translationally, contains two covalently linked bilin chromophores.

Its subcellular location is the plastid. It localises to the chloroplast thylakoid membrane. In terms of biological role, light-harvesting photosynthetic bile pigment-protein from the phycobiliprotein complex. The protein is R-phycoerythrin alpha chain (cpeA) of Pyropia haitanensis (Red seaweed).